The primary structure comprises 103 residues: NADH-quinone oxidoreductase subunit K (103 aa).

3 helical membrane passes run 6-26 (LSHFLILGAILFAISVVGIFL), 32-52 (LVLLMAIELMLLAVNMNFVAF), and 63-83 (IFVFFILTVAAAESAIGLAIL).

It belongs to the complex I subunit 4L family. NDH-1 is composed of 14 different subunits. Subunits NuoA, H, J, K, L, M, N constitute the membrane sector of the complex.

It is found in the cell inner membrane. The enzyme catalyses a quinone + NADH + 5 H(+)(in) = a quinol + NAD(+) + 4 H(+)(out). NDH-1 shuttles electrons from NADH, via FMN and iron-sulfur (Fe-S) centers, to quinones in the respiratory chain. The immediate electron acceptor for the enzyme in this species is believed to be ubiquinone. Couples the redox reaction to proton translocation (for every two electrons transferred, four hydrogen ions are translocated across the cytoplasmic membrane), and thus conserves the redox energy in a proton gradient. This Dechloromonas aromatica (strain RCB) protein is NADH-quinone oxidoreductase subunit K.